The following is a 207-amino-acid chain: FMN-dependent NADH:quinone oxidoreductase (207 aa).

FMN-binding positions include Ser10, 16–18, 96–99, and 141–144; these read SIS, MYNL, and SRGG.

It belongs to the azoreductase type 1 family. Homodimer. It depends on FMN as a cofactor.

It carries out the reaction 2 a quinone + NADH + H(+) = 2 a 1,4-benzosemiquinone + NAD(+). The catalysed reaction is N,N-dimethyl-1,4-phenylenediamine + anthranilate + 2 NAD(+) = 2-(4-dimethylaminophenyl)diazenylbenzoate + 2 NADH + 2 H(+). In terms of biological role, quinone reductase that provides resistance to thiol-specific stress caused by electrophilic quinones. Functionally, also exhibits azoreductase activity. Catalyzes the reductive cleavage of the azo bond in aromatic azo compounds to the corresponding amines. This chain is FMN-dependent NADH:quinone oxidoreductase, found in Nostoc sp. (strain PCC 7120 / SAG 25.82 / UTEX 2576).